We begin with the raw amino-acid sequence, 364 residues long: Trans-enoyl reductase sthE (364 aa).

51 to 54 (TDYK) serves as a coordination point for NADP(+). 137-144 (WGTAALAI) is a binding site for substrate. Residues 172–175 (ATAT), 195–198 (SESS), Tyr-213, and 261–262 (LE) each bind NADP(+). Substrate is bound at residue 281-285 (GFEGQ). 351 to 352 (VK) serves as a coordination point for NADP(+).

The protein belongs to the zinc-containing alcohol dehydrogenase family. Monomer.

The catalysed reaction is 7 malonyl-CoA + acetyl-CoA + 10 AH2 + 5 S-adenosyl-L-methionine + 2 H(+) = dehydroprobetaenone I + 10 A + 5 S-adenosyl-L-homocysteine + 7 CO2 + 8 CoA + 6 H2O. It functions in the pathway mycotoxin biosynthesis. In terms of biological role, trans-enoyl reductase; part of the gene cluster that mediates the biosynthesis of the phytotoxin stemphyloxin II. The first step of the pathway is the synthesis of dehydroprobetaenone I by the polyketide synthase sthA and the enoyl reductase sthE via condensation of one acetyl-CoA starter unit with 7 malonyl-CoA units and 5 methylations. The C-terminal reductase (R) domain of sthA catalyzes the reductive release of the polyketide chain. Because sthA lacks a designated enoylreductase (ER) domain, the required activity is provided the enoyl reductase sthE. The short-chain dehydrogenase/reductase sthC then catalyzes reduction of dehydroprobetaenone I to probetaenone I. The cytochrome P450 monooxygenase sthF catalyzes successive epoxidation, oxidation (resulting from epoxide opening) and hydroxylation to install a tertiary alcohol in the decaline ring to yield betaenone C from dehydroprobetaenone I and betaenone B from probetaenone I. The FAD-linked oxidoreductase sthB is responsible for the conversion of betaenone C to betaenone A via an intramolecular aldol reaction between C-1 and C-17 to form the bridged tricyclic system in betaenone A. Finally, the cytochrome P450 monooxygenase sthD catalyzes the hydroxylation of C-15 to afford the final metabolite stemphyloxin II. The polypeptide is Trans-enoyl reductase sthE (Phaeosphaeria nodorum (strain SN15 / ATCC MYA-4574 / FGSC 10173) (Glume blotch fungus)).